Reading from the N-terminus, the 298-residue chain is Probable endonuclease 4 (298 aa).

Zn(2+)-binding residues include His69, His111, Glu146, Asp180, His183, His215, Asp228, His230, and Glu260.

The protein belongs to the AP endonuclease 2 family. Zn(2+) is required as a cofactor.

It catalyses the reaction Endonucleolytic cleavage to 5'-phosphooligonucleotide end-products.. Its function is as follows. Endonuclease IV plays a role in DNA repair. It cleaves phosphodiester bonds at apurinic or apyrimidinic (AP) sites, generating a 3'-hydroxyl group and a 5'-terminal sugar phosphate. This chain is Probable endonuclease 4, found in Bacillus cereus (strain 03BB102).